The sequence spans 464 residues: Peptidase inhibitor 16 (464 aa).

The N-terminal stretch at methionine 1–alanine 27 is a signal peptide. An SCP domain is found at valine 37 to tyrosine 165. N-linked (GlcNAc...) asparagine glycosylation is present at asparagine 114. Disordered regions lie at residues aspartate 208–proline 241, valine 260–proline 281, proline 304–threonine 347, and threonine 386–valine 412. The segment covering serine 311–serine 325 has biased composition (basic and acidic residues). Over residues serine 395–alanine 411 the composition is skewed to low complexity.

It belongs to the CRISP family. As to quaternary structure, interacts with PSP94/MSMB. Post-translationally, N-glycosylated.

It localises to the secreted. Its function is as follows. May inhibit cardiomyocyte growth. The protein is Peptidase inhibitor 16 (PI16) of Bos taurus (Bovine).